The sequence spans 229 residues: C-type lectin domain family 1 member B (229 aa).

The Cytoplasmic portion of the chain corresponds to 1 to 33 (MQDEDGYITLNIKTRKPALISVGSASSSWWRVM). Residue Y7 is modified to Phosphotyrosine. An ITAM motif is present at residues 7-10 (YITL). Residues 34 to 54 (ALILLILCVGMVVGLVALGIW) traverse the membrane as a helical; Signal-anchor for type II membrane protein segment. Topologically, residues 55–229 (SVMQRNYLQG…AGMTKVDQLP (175 aa)) are extracellular. N68 carries N-linked (GlcNAc...) asparagine glycosylation. The cysteines at positions 102 and 113 are disulfide-linked. Residues 109–217 (YGDSCYGFFR…CENKHYLMCE (109 aa)) enclose the C-type lectin domain. N-linked (GlcNAc...) asparagine glycans are attached at residues N120 and N134. Disulfide bonds link C130-C216 and C195-C208.

In terms of assembly, homodimer. Interacts (via cytoplasmic domain) with RACK1; promotes CLEC1B ubiquitination and proteasome-mediated degradation. Interacts (dimer) with SYK (via SH2 domains). Interacts with PDPN; the interaction is independent of CLEC1B glycosylation and activates CLEC1B. Post-translationally, glycosylated. In terms of processing, phosphorylated on tyrosine residue in response to rhodocytin binding. In terms of tissue distribution, expressed preferentially in the liver. Also expressed in immune cells of myeloid origin and on the surface of platelets.

The protein resides in the membrane. In terms of biological role, C-type lectin-like receptor that functions as a platelet receptor for the lymphatic endothelial marker, PDPN. After ligand activation, signals via sequential activation of SRC and SYK tyrosine kinases leading to activation of PLCG2. Its function is as follows. (Microbial infection) Acts as a receptor for the platelet-aggregating snake venom protein rhodocytin. Rhodocytin binding leads to tyrosine phosphorylation and this promotes the binding of spleen tyrosine kinase (SYK) and initiation of downstream tyrosine phosphorylation events and activation of PLCG2. (Microbial infection) Acts as an attachment factor for Human immunodeficiency virus type 1 (HIV-1) and facilitates its capture by platelets. The protein is C-type lectin domain family 1 member B (CLEC1B) of Homo sapiens (Human).